Here is a 142-residue protein sequence, read N- to C-terminus: Large ribosomal subunit protein uL13 (142 aa).

Belongs to the universal ribosomal protein uL13 family. As to quaternary structure, part of the 50S ribosomal subunit.

In terms of biological role, this protein is one of the early assembly proteins of the 50S ribosomal subunit, although it is not seen to bind rRNA by itself. It is important during the early stages of 50S assembly. This chain is Large ribosomal subunit protein uL13, found in Azoarcus sp. (strain BH72).